Reading from the N-terminus, the 99-residue chain is Malonate decarboxylase acyl carrier protein (99 aa).

Ser-25 is modified (O-(phosphoribosyl dephospho-coenzyme A)serine).

This sequence belongs to the MdcC family. Post-translationally, covalently binds the prosthetic group of malonate decarboxylase.

The protein localises to the cytoplasm. In terms of biological role, subunit of malonate decarboxylase, it is an acyl carrier protein to which acetyl and malonyl thioester residues are bound via a 2'-(5''-phosphoribosyl)-3'-dephospho-CoA prosthetic group and turn over during the catalytic mechanism. This is Malonate decarboxylase acyl carrier protein from Pseudomonas paraeruginosa (strain DSM 24068 / PA7) (Pseudomonas aeruginosa (strain PA7)).